We begin with the raw amino-acid sequence, 465 residues long: Glutamate--tRNA ligase 1 (465 aa).

A 'HIGH' region motif is present at residues 8 to 18 (PSPTGNLHIGG). The short motif at 236-240 (KLSKR) is the 'KMSKS' region element. Lys239 provides a ligand contact to ATP.

The protein belongs to the class-I aminoacyl-tRNA synthetase family. Glutamate--tRNA ligase type 1 subfamily. In terms of assembly, monomer.

The protein resides in the cytoplasm. It carries out the reaction tRNA(Glu) + L-glutamate + ATP = L-glutamyl-tRNA(Glu) + AMP + diphosphate. Functionally, catalyzes the attachment of glutamate to tRNA(Glu) in a two-step reaction: glutamate is first activated by ATP to form Glu-AMP and then transferred to the acceptor end of tRNA(Glu). This is Glutamate--tRNA ligase 1 from Wolinella succinogenes (strain ATCC 29543 / DSM 1740 / CCUG 13145 / JCM 31913 / LMG 7466 / NCTC 11488 / FDC 602W) (Vibrio succinogenes).